A 536-amino-acid polypeptide reads, in one-letter code: MTFSEILDRVGSMGPFQYLHVTLLALPVLGIANHNLLQIFTATTPVHHCRPPPNASIGPWVLPLDPNGKPEKCLRFVHLPNASLPNDTQRATEPCLDGWIYNSTRDTIVIEWDLVCSSNKLKEMAQSIFMAGILVGGPVIGELSDRFGRKPILTWSYLMLAASGSGAAFSPSLPVYMIFRFLCGCSISGISLSTVILNVEWVPTSMRAISSTSIGYCYTIGQFILSGLAYAIPQWRWLQLTSSAPFFIFSLLSWWVPESIRWLVLSGKYSKALKTLQRVATFNGKKEEGKKLTIEELKFNLQKDITSAKVKYGLSDLFRVSILRRVTFCLSLAWFSTGFAYYSLAMGVEEFGVNIYILQIIFGGVDIPAKFITILSLSYLGRRITQSFLLLLAGGAILALIFVPSEMQLLRTALAVFGKGCLSGSFSCLFLYTSELYPTVLRQTGMGISNVWARVGSMIAPLVKITGELQPFIPNVIFGTTALLGGSAAFFLLETLNRPLPETIEDIQNWHKQVQKTKQESEAEKASQIIPLKTGG.

Topologically, residues 1–11 (MTFSEILDRVG) are cytoplasmic. At Ser4 the chain carries Phosphoserine. The helical transmembrane segment at 12-32 (SMGPFQYLHVTLLALPVLGIA) threads the bilayer. Over 33-123 (NHNLLQIFTA…LVCSSNKLKE (91 aa)) the chain is Extracellular. Asn81 and Asn86 each carry an N-linked (GlcNAc...) asparagine glycan. A helical transmembrane segment spans residues 124–144 (MAQSIFMAGILVGGPVIGELS). Residues 145 to 158 (DRFGRKPILTWSYL) are Cytoplasmic-facing. A helical membrane pass occupies residues 159–179 (MLAASGSGAAFSPSLPVYMIF). A topological domain (extracellular) is located at residue Arg180. Residues 181 to 201 (FLCGCSISGISLSTVILNVEW) form a helical membrane-spanning segment. Residues 202–212 (VPTSMRAISST) lie on the Cytoplasmic side of the membrane. The chain crosses the membrane as a helical span at residues 213–233 (SIGYCYTIGQFILSGLAYAIP). Residues 234–236 (QWR) lie on the Extracellular side of the membrane. Residues 237 to 257 (WLQLTSSAPFFIFSLLSWWVP) traverse the membrane as a helical segment. Over 258–327 (ESIRWLVLSG…FRVSILRRVT (70 aa)) the chain is Cytoplasmic. A helical transmembrane segment spans residues 328-348 (FCLSLAWFSTGFAYYSLAMGV). Topologically, residues 349–354 (EEFGVN) are extracellular. The helical transmembrane segment at 355–375 (IYILQIIFGGVDIPAKFITIL) threads the bilayer. Residues 376-383 (SLSYLGRR) lie on the Cytoplasmic side of the membrane. The chain crosses the membrane as a helical span at residues 384–404 (ITQSFLLLLAGGAILALIFVP). The Extracellular segment spans residues 405–411 (SEMQLLR). Residues 412–432 (TALAVFGKGCLSGSFSCLFLY) form a helical membrane-spanning segment. The Cytoplasmic segment spans residues 433 to 471 (TSELYPTVLRQTGMGISNVWARVGSMIAPLVKITGELQP). The chain crosses the membrane as a helical span at residues 472–492 (FIPNVIFGTTALLGGSAAFFL). The Extracellular portion of the chain corresponds to 493–536 (LETLNRPLPETIEDIQNWHKQVQKTKQESEAEKASQIIPLKTGG). The disordered stretch occupies residues 515 to 536 (QKTKQESEAEKASQIIPLKTGG).

Belongs to the major facilitator (TC 2.A.1) superfamily. Organic cation transporter (TC 2.A.1.19) family. Expressed in the liver, brain, kidney, choroid plexus and weakly in the eye. Moderately expressed (at protein level) in the brain capillary endothelial cells (BCEC).

Its subcellular location is the basolateral cell membrane. It carries out the reaction estrone 3-sulfate(out) + glutarate(in) = estrone 3-sulfate(in) + glutarate(out). The enzyme catalyses estrone 3-sulfate(in) + 2-oxoglutarate(out) = estrone 3-sulfate(out) + 2-oxoglutarate(in). The catalysed reaction is glutarate(in) + 2-oxoglutarate(out) = glutarate(out) + 2-oxoglutarate(in). It catalyses the reaction urate(in) + 2-oxoglutarate(out) = urate(out) + 2-oxoglutarate(in). It carries out the reaction taurocholate(out) + glutarate(in) = taurocholate(in) + glutarate(out). The enzyme catalyses dehydroepiandrosterone 3-sulfate(out) + glutarate(in) = dehydroepiandrosterone 3-sulfate(in) + glutarate(out). The catalysed reaction is prostaglandin F2alpha(out) + glutarate(in) = prostaglandin F2alpha(in) + glutarate(out). It catalyses the reaction prostaglandin F2alpha(out) + 2-oxoglutarate(in) = prostaglandin F2alpha(in) + 2-oxoglutarate(out). It carries out the reaction (R)-carnitine(out) + 2-oxoglutarate(in) = (R)-carnitine(in) + 2-oxoglutarate(out). The enzyme catalyses glutarate(in) + (R)-carnitine(out) = glutarate(out) + (R)-carnitine(in). The catalysed reaction is prostaglandin E2(out) + 2-oxoglutarate(in) = prostaglandin E2(in) + 2-oxoglutarate(out). It catalyses the reaction prostaglandin E2(out) + glutarate(in) = prostaglandin E2(in) + glutarate(out). It carries out the reaction urate(in) + glutarate(out) = urate(out) + glutarate(in). The enzyme catalyses taurocholate(out) + 2-oxoglutarate(in) = taurocholate(in) + 2-oxoglutarate(out). The catalysed reaction is dehydroepiandrosterone 3-sulfate(out) + 2-oxoglutarate(in) = dehydroepiandrosterone 3-sulfate(in) + 2-oxoglutarate(out). It catalyses the reaction kynurenate(out) + a dicarboxylate(in) = kynurenate(in) + a dicarboxylate(out). It carries out the reaction (indol-3-yl)acetate(out) + a dicarboxylate(in) = (indol-3-yl)acetate(in) + a dicarboxylate(out). The enzyme catalyses indoxyl sulfate(out) + a dicarboxylate(in) = indoxyl sulfate(in) + a dicarboxylate(out). The catalysed reaction is N-benzoylglycine(out) + a dicarboxylate(in) = N-benzoylglycine(in) + a dicarboxylate(out). It catalyses the reaction 3-carboxy-4-methyl-5-propyl-2-furanpropanoate(out) + a dicarboxylate(in) = 3-carboxy-4-methyl-5-propyl-2-furanpropanoate(in) + a dicarboxylate(out). It carries out the reaction (6R)-L-erythro-5,6,7,8-tetrahydrobiopterin(out) + a dicarboxylate(in) = (6R)-L-erythro-5,6,7,8-tetrahydrobiopterin(in) + a dicarboxylate(out). The enzyme catalyses L-erythro-7,8-dihydrobiopterin(out) + a dicarboxylate(in) = L-erythro-7,8-dihydrobiopterin(in) + a dicarboxylate(out). The catalysed reaction is L-sepiapterin(out) + a dicarboxylate(in) = L-sepiapterin(in) + a dicarboxylate(out). Its function is as follows. Functions as an organic anion/dicarboxylate exchanger that couples organic anion uptake indirectly to the sodium gradient. Transports organic anions such as estrone 3-sulfate (E1S) and urate in exchange for dicarboxylates such as glutarate or ketoglutarate (2-oxoglutarate). Plays an important role in the excretion of endogenous and exogenous organic anions, especially from the kidney and the brain. E1S transport is pH- and chloride-dependent and may also involve E1S/cGMP exchange. Responsible for the transport of prostaglandin E2 (PGE2) and prostaglandin F2(alpha) (PGF2(alpha)) in the basolateral side of the renal tubule. Involved in the transport of neuroactive tryptophan metabolites kynurenate and xanthurenate. Functions as a biopterin transporters involved in the uptake and the secretion of coenzymes tetrahydrobiopterin (BH4), dihydrobiopterin (BH2) and sepiapterin to urine, thereby determining baseline levels of blood biopterins. May be involved in the basolateral transport of steviol, a metabolite of the popular sugar substitute stevioside. May participate in the detoxification/ renal excretion of drugs and xenobiotics, such as the histamine H(2)-receptor antagonists fexofenadine and cimetidine, the antibiotic benzylpenicillin (PCG), the anionic herbicide 2,4-dichloro-phenoxyacetate (2,4-D), the diagnostic agent p-aminohippurate (PAH), the antiviral acyclovir (ACV), and the mycotoxin ochratoxin (OTA), by transporting these exogenous organic anions across the cell membrane in exchange for dicarboxylates such as 2-oxoglutarate. Contributes to the renal uptake of potent uremic toxins (indoxyl sulfate (IS), indole acetate (IA), hippurate/N-benzoylglycine (HA) and 3-carboxy-4-methyl-5-propyl-2-furanpropionate (CMPF)), pravastatin, PCG, E1S and dehydroepiandrosterone sulfate (DHEAS), and is partly involved in the renal uptake of temocaprilat (an angiotensin-converting enzyme (ACE) inhibitor). May contribute to the release of cortisol in the adrenals. Involved in one of the detoxification systems on the choroid plexus (CP), removes substrates such as E1S or taurocholate (TC), PCG, 2,4-D and PAH, from the cerebrospinal fluid (CSF) to the blood for eventual excretion in urine and bile. Regulates the CSF concentration of histamine H(2)-receptor antagonists cimetidine and ranitidine at the CP. Also contributes to the uptake of several other organic compounds such as the prostanoids prostaglandin E(2) and prostaglandin F(2-alpha), L-carnitine, and the therapeutic drugs allopurinol, 6-mercaptopurine (6-MP) and 5-fluorouracil (5-FU). Mediates the uptake from brain of organic anions, such as E1S, PAH, and OTA. Mediates the transport of PAH, PCG, and the statins pravastatin and pitavastatin, from the cerebrum into the blood circulation across the blood-brain barrier (BBB). In summary, plays a role in the efflux of drugs and xenobiotics, helping reduce their undesired toxicological effects on the body. The polypeptide is Organic anion transporter 3 (Slc22a8) (Rattus norvegicus (Rat)).